The following is a 166-amino-acid chain: Large ribosomal subunit protein uL10 (166 aa).

The protein belongs to the universal ribosomal protein uL10 family. As to quaternary structure, part of the ribosomal stalk of the 50S ribosomal subunit. The N-terminus interacts with L11 and the large rRNA to form the base of the stalk. The C-terminus forms an elongated spine to which L12 dimers bind in a sequential fashion forming a multimeric L10(L12)X complex.

Functionally, forms part of the ribosomal stalk, playing a central role in the interaction of the ribosome with GTP-bound translation factors. This Aromatoleum aromaticum (strain DSM 19018 / LMG 30748 / EbN1) (Azoarcus sp. (strain EbN1)) protein is Large ribosomal subunit protein uL10.